The primary structure comprises 223 residues: Imidazoleglycerol-phosphate dehydratase (223 aa).

Belongs to the imidazoleglycerol-phosphate dehydratase family.

It catalyses the reaction D-erythro-1-(imidazol-4-yl)glycerol 3-phosphate = 3-(imidazol-4-yl)-2-oxopropyl phosphate + H2O. Its pathway is amino-acid biosynthesis; L-histidine biosynthesis; L-histidine from 5-phospho-alpha-D-ribose 1-diphosphate: step 6/9. In Torulaspora delbrueckii (Yeast), this protein is Imidazoleglycerol-phosphate dehydratase (HIS3).